A 180-amino-acid chain; its full sequence is Ribulose bisphosphate carboxylase small subunit 1A, chloroplastic (180 aa).

The transit peptide at 1–54 (MASSMLSSATMVASPAQATMVAPFNGLKSSAAFPATRKANNDITSITSNGGRVN) directs the protein to the chloroplast. Serine 113 is modified (phosphoserine).

It belongs to the RuBisCO small chain family. Heterohexadecamer of 8 large and 8 small subunits.

It localises to the plastid. The protein localises to the chloroplast membrane. Its subcellular location is the chloroplast stroma. Functionally, ruBisCO catalyzes two reactions: the carboxylation of D-ribulose 1,5-bisphosphate, the primary event in carbon dioxide fixation, as well as the oxidative fragmentation of the pentose substrate. Both reactions occur simultaneously and in competition at the same active site. Although the small subunit is not catalytic it is essential for maximal activity. The sequence is that of Ribulose bisphosphate carboxylase small subunit 1A, chloroplastic (RBCS-1A) from Arabidopsis thaliana (Mouse-ear cress).